The primary structure comprises 157 residues: Histidine-containing phosphotransfer protein 5 (157 aa).

Met1 is modified (N-acetylmethionine). An HPt domain is found at 41-148; the sequence is TPDFVAEVVS…NLEKQILQAG (108 aa). A Phosphohistidine modification is found at His83.

Interacts with the B-type response regulators ARR1 and ARR2. Binds to AHK2, AHK3, AHK4 and AHK5. Post-translationally, two-component system major event consists of a His-to-Asp phosphorelay between a sensor histidine kinase (HK) and a response regulator (RR). In plants, the His-to-Asp phosphorelay involves an additional intermediate named Histidine-containing phosphotransfer protein (HPt). This multistep phosphorelay consists of a His-Asp-His-Asp sequential transfer of a phosphate group between first a His and an Asp of the HK protein, followed by the transfer to a conserved His of the HPt protein and finally the transfer to an Asp in the receiver domain of the RR protein. Expressed in the whole plant.

The protein resides in the cytoplasm. It localises to the cytosol. Its subcellular location is the nucleus. In terms of biological role, functions as a two-component phosphorelay mediator between cytokinin sensor histidine kinases and response regulators (B-type ARRs). Plays an important role in propagating cytokinin signal transduction through the multistep His-to-Asp phosphorelay. The protein is Histidine-containing phosphotransfer protein 5 (AHP5) of Arabidopsis thaliana (Mouse-ear cress).